Reading from the N-terminus, the 188-residue chain is Elongation factor P (188 aa).

The protein belongs to the elongation factor P family.

Its subcellular location is the cytoplasm. It participates in protein biosynthesis; polypeptide chain elongation. Involved in peptide bond synthesis. Stimulates efficient translation and peptide-bond synthesis on native or reconstituted 70S ribosomes in vitro. Probably functions indirectly by altering the affinity of the ribosome for aminoacyl-tRNA, thus increasing their reactivity as acceptors for peptidyl transferase. In Rickettsia prowazekii (strain Madrid E), this protein is Elongation factor P (efp).